The primary structure comprises 841 residues: Protein translocase subunit SecA (841 aa).

Residues glutamine 86, 104–108, and aspartate 493 contribute to the ATP site; that span reads GEGKT. The segment at 788 to 822 is disordered; that stretch reads EEVAEGKAVRPSANGQEDKKAKRKPVRKAENIGRN. Cysteine 825, cysteine 827, cysteine 836, and cysteine 837 together coordinate Zn(2+).

This sequence belongs to the SecA family. As to quaternary structure, monomer and homodimer. Part of the essential Sec protein translocation apparatus which comprises SecA, SecYEG and auxiliary proteins SecDF. Other proteins may also be involved. The cofactor is Zn(2+).

The protein resides in the cell membrane. It is found in the cytoplasm. It carries out the reaction ATP + H2O + cellular proteinSide 1 = ADP + phosphate + cellular proteinSide 2.. In terms of biological role, part of the Sec protein translocase complex. Interacts with the SecYEG preprotein conducting channel. Has a central role in coupling the hydrolysis of ATP to the transfer of proteins into and across the cell membrane, serving as an ATP-driven molecular motor driving the stepwise translocation of polypeptide chains across the membrane. The sequence is that of Protein translocase subunit SecA from Shouchella clausii (strain KSM-K16) (Alkalihalobacillus clausii).